Consider the following 67-residue polypeptide: DNA-directed RNA polymerase subunit omega (67 aa).

It belongs to the RNA polymerase subunit omega family. In terms of assembly, the RNAP catalytic core consists of 2 alpha, 1 beta, 1 beta' and 1 omega subunit. When a sigma factor is associated with the core the holoenzyme is formed, which can initiate transcription.

The catalysed reaction is RNA(n) + a ribonucleoside 5'-triphosphate = RNA(n+1) + diphosphate. Promotes RNA polymerase assembly. Latches the N- and C-terminal regions of the beta' subunit thereby facilitating its interaction with the beta and alpha subunits. In Listeria innocua serovar 6a (strain ATCC BAA-680 / CLIP 11262), this protein is DNA-directed RNA polymerase subunit omega.